Here is a 76-residue protein sequence, read N- to C-terminus: Small ribosomal subunit protein bS18 (76 aa).

It belongs to the bacterial ribosomal protein bS18 family. In terms of assembly, part of the 30S ribosomal subunit. Forms a tight heterodimer with protein bS6.

Binds as a heterodimer with protein bS6 to the central domain of the 16S rRNA, where it helps stabilize the platform of the 30S subunit. The polypeptide is Small ribosomal subunit protein bS18 (Carboxydothermus hydrogenoformans (strain ATCC BAA-161 / DSM 6008 / Z-2901)).